Consider the following 471-residue polypeptide: MATFPPLSMTRTKLAVLARQKLPCSSKSIPRAQLIKEKDDIDYYLEQNIKGLSKEEVAAHRNSYKKSICVDMLRDGFHKSFTELFSLMEQWDKLREAAQARSLFWLQRPLEDQPDKLDNFYHYLTKAEAAERKGYYEEVYNNLYALACYFDNSEDKWVRNHFYERCFKIAQLIKVDGGKKEAEAEAHMGLLYEEEGELLKAAEHYEAFHELTQGRLWKDATGQFLNLIACESLVRTYRLLSDRMLQNRDYKQAIKILIKASEIAREGNDRSMEGEASYYLGLAHLASGEYETALSVLDRYSEISTSLDDELSLGRAYEAMAKVLQSQGEMTEAIKYLEKFVVIARNNFKSLDVIQACTMLGDIYNEKGQYNKASDYFQQAFSTAMEVTKTTLMDETKVHYGIARAHQMMLTMNGYIESADMNSLNCLLSWKETRTQVEYDPILGEARKATEDNIYQFPDAQEETRRSPENQ.

7 TPR repeats span residues 92 to 131 (DKLR…EAAE), 136 to 173 (YEEV…AQLI), 182 to 215 (AEAE…TQGR), 234 to 267 (VRTY…AREG), 274 to 307 (GEAS…STSL), 314 to 347 (GRAY…ARNN), and 354 to 387 (IQAC…AMEV).

The protein resides in the cytoplasm. It is found in the cytoskeleton. Its subcellular location is the flagellum axoneme. In terms of biological role, axonemal protein which is implicated in axonemal and/or peri-axonemal structure assembly and regulates flagellum assembly and beating and therefore sperm motility. This Rattus norvegicus (Rat) protein is Tetratricopeptide repeat protein 29 (Ttc29).